The sequence spans 512 residues: Sodium/proline symporter (512 aa).

13 helical membrane-spanning segments follow: residues 16–36 (WQTYIMIAVYFLILIVIGFYG), 54–74 (IGPYITALSAGASDMSGWMIM), 85–105 (LSAMWITIGLTLGAYINYFVV), 139–159 (IISGLIIVVFFTLYTHSGFVS), 174–194 (FGLILVAFIVIFYTFFGGYLA), 200–220 (FFQGVIMLIAMVMVPIVAMMN), 240–260 (LFKGLSFIGIISLFSWGLGYF), 286–306 (ISWMAVGLLGAVAVGLTGIAF), 327–347 (VLFHPLVGGFLLAAILAAIMS), 381–401 (FVMIGRLSVLVVAIVAIAIAW), 410–430 (LVGNAWAGFGASFSPLVLFAL), 438–458 (AGAVSGMVSGALVVIVWIAWI), and 467–487 (IFGLYEIIPGFIVSVIVTYVV).

Belongs to the sodium:solute symporter (SSF) (TC 2.A.21) family.

It localises to the cell membrane. The catalysed reaction is L-proline(in) + Na(+)(in) = L-proline(out) + Na(+)(out). Its function is as follows. Catalyzes the sodium-dependent uptake of extracellular L-proline. Since most S.aureus strains are L-proline auxotrophs, this transporter may aid the bacterial persistence during an infection of tissues with low proline concentrations. This is Sodium/proline symporter (putP) from Staphylococcus aureus (strain Mu3 / ATCC 700698).